The sequence spans 213 residues: Protein GrpE (213 aa).

Positions 1–61 (MEQGEKQVME…AEKAPTAEEL (61 aa)) are disordered. A compositionally biased stretch (acidic residues) spans 13–35 (TYDEPEREQPIEEEAAPQPEEES).

It belongs to the GrpE family. As to quaternary structure, homodimer.

It localises to the cytoplasm. Its function is as follows. Participates actively in the response to hyperosmotic and heat shock by preventing the aggregation of stress-denatured proteins, in association with DnaK and GrpE. It is the nucleotide exchange factor for DnaK and may function as a thermosensor. Unfolded proteins bind initially to DnaJ; upon interaction with the DnaJ-bound protein, DnaK hydrolyzes its bound ATP, resulting in the formation of a stable complex. GrpE releases ADP from DnaK; ATP binding to DnaK triggers the release of the substrate protein, thus completing the reaction cycle. Several rounds of ATP-dependent interactions between DnaJ, DnaK and GrpE are required for fully efficient folding. The chain is Protein GrpE from Geobacillus kaustophilus (strain HTA426).